The chain runs to 308 residues: tRNA pseudouridine synthase B (308 aa).

Aspartate 45 (nucleophile) is an active-site residue.

The protein belongs to the pseudouridine synthase TruB family. Type 1 subfamily.

It catalyses the reaction uridine(55) in tRNA = pseudouridine(55) in tRNA. Responsible for synthesis of pseudouridine from uracil-55 in the psi GC loop of transfer RNAs. In Gloeothece citriformis (strain PCC 7424) (Cyanothece sp. (strain PCC 7424)), this protein is tRNA pseudouridine synthase B.